A 189-amino-acid polypeptide reads, in one-letter code: Glycerol-3-phosphate acyltransferase (189 aa).

Helical transmembrane passes span 1–21 (MFWLLALLAYLLGSLSFAIVL), 50–70 (KLAILTLLGDLCKGLLPVLLA), 77–97 (LHAQAWVGVCAVLGHLFPLYF), 111–131 (MLMGLYFPAALLAIGAWLLTF), and 151–171 (LLAWREPEALLPITVLTAMIV).

The protein belongs to the PlsY family. Probably interacts with PlsX.

Its subcellular location is the cell inner membrane. The catalysed reaction is an acyl phosphate + sn-glycerol 3-phosphate = a 1-acyl-sn-glycero-3-phosphate + phosphate. It functions in the pathway lipid metabolism; phospholipid metabolism. Its function is as follows. Catalyzes the transfer of an acyl group from acyl-phosphate (acyl-PO(4)) to glycerol-3-phosphate (G3P) to form lysophosphatidic acid (LPA). This enzyme utilizes acyl-phosphate as fatty acyl donor, but not acyl-CoA or acyl-ACP. This Pseudomonas putida (strain GB-1) protein is Glycerol-3-phosphate acyltransferase.